Here is a 1067-residue protein sequence, read N- to C-terminus: Kinesin-like protein KIF11-B (1067 aa).

Residues 18–359 (NIQVVVRCRP…LDYANRAKSI (342 aa)) form the Kinesin motor domain. 105-112 (GQTGTGKT) contributes to the ATP binding site. A coiled-coil region spans residues 365–480 (VNQKLTKKAL…SKEQLAQESF (116 aa)). T937 is subject to Phosphothreonine; by CDK1. S1046 bears the Phosphoserine; by NEK6 mark.

The protein belongs to the TRAFAC class myosin-kinesin ATPase superfamily. Kinesin family. BimC subfamily. As to quaternary structure, heterotetramer of two heavy and two light chains. Interacts with aurka. Post-translationally, phosphorylation of Thr-937 during mitosis controls the association of this protein with the spindle apparatus. In terms of processing, a subset of this protein primarily localized at the spindle pole is phosphorylated by NEK6 during mitosis. Phosphorylated on a serine residue by aurka. As to expression, in unfertilized eggs, shows highest expression in the germinal vesicle and radial yolk-poor channels. Also present in testis.

The protein localises to the cytoplasm. It is found in the cytoskeleton. It localises to the spindle pole. In terms of biological role, plus end-directed motor protein required for establishing a bipolar spindle. Associates with both interphase and spindle microtubules. May be involved in nuclear divisions taking place during the development of unfertilized eggs. Required in non-mitotic cells for transport of secretory proteins from the Golgi complex to the cell surface. The chain is Kinesin-like protein KIF11-B (kif11-b) from Xenopus laevis (African clawed frog).